A 56-amino-acid chain; its full sequence is Large ribosomal subunit protein bL32 (56 aa).

Residues 1–26 (MAVQQNKKSRSKRGMRRSHDALSTAQ) are disordered. The segment covering 7 to 16 (KKSRSKRGMR) has biased composition (basic residues).

Belongs to the bacterial ribosomal protein bL32 family.

The protein is Large ribosomal subunit protein bL32 of Shewanella baltica (strain OS155 / ATCC BAA-1091).